Consider the following 228-residue polypeptide: 2-C-methyl-D-erythritol 4-phosphate cytidylyltransferase (228 aa).

It belongs to the IspD/TarI cytidylyltransferase family. IspD subfamily.

It carries out the reaction 2-C-methyl-D-erythritol 4-phosphate + CTP + H(+) = 4-CDP-2-C-methyl-D-erythritol + diphosphate. Its pathway is isoprenoid biosynthesis; isopentenyl diphosphate biosynthesis via DXP pathway; isopentenyl diphosphate from 1-deoxy-D-xylulose 5-phosphate: step 2/6. Catalyzes the formation of 4-diphosphocytidyl-2-C-methyl-D-erythritol from CTP and 2-C-methyl-D-erythritol 4-phosphate (MEP). The sequence is that of 2-C-methyl-D-erythritol 4-phosphate cytidylyltransferase from Actinobacillus pleuropneumoniae serotype 3 (strain JL03).